A 207-amino-acid polypeptide reads, in one-letter code: Large ribosomal subunit protein uL4 (207 aa).

The disordered stretch occupies residues 57–78 (VAGGGKKPWRQKGTGRARHGSI). Positions 63 to 77 (KPWRQKGTGRARHGS) are enriched in basic residues.

This sequence belongs to the universal ribosomal protein uL4 family. Part of the 50S ribosomal subunit.

One of the primary rRNA binding proteins, this protein initially binds near the 5'-end of the 23S rRNA. It is important during the early stages of 50S assembly. It makes multiple contacts with different domains of the 23S rRNA in the assembled 50S subunit and ribosome. Functionally, forms part of the polypeptide exit tunnel. The sequence is that of Large ribosomal subunit protein uL4 from Onion yellows phytoplasma (strain OY-M).